A 38-amino-acid chain; its full sequence is Glutathione S-transferase 2 (38 aa).

The protein belongs to the GST superfamily. Phi family.

It carries out the reaction RX + glutathione = an S-substituted glutathione + a halide anion + H(+). Conjugation of reduced glutathione to a wide number of exogenous and endogenous hydrophobic electrophiles. In plants, may have a detoxification role against certain herbicides. This chain is Glutathione S-transferase 2, found in Populus euphratica (Euphrates poplar).